A 263-amino-acid chain; its full sequence is Proteasome subunit beta type-5 (263 aa).

Residues 1-59 constitute a propeptide, removed in mature form; it reads MALASVLERPLPVNQRGFFGLGGRADLLDLGPGSLSDGLSLAAPGWGVPEEPGIEMLHG. The active-site Nucleophile is the threonine 60. Position 108 (alanine 108) interacts with bortezomib.

It belongs to the peptidase T1B family. The 26S proteasome consists of a 20S proteasome core and two 19S regulatory subunits. The 20S proteasome core is a barrel-shaped complex made of 28 subunits that are arranged in four stacked rings. The two outer rings are each formed by seven alpha subunits, and the two inner rings are formed by seven beta subunits. The proteolytic activity is exerted by three beta-subunits PSMB5, PSMB6 and PSMB7. Directly interacts with POMP. Interacts with ABCB1 and TAP1. In terms of assembly, (Microbial infection) Interacts with HIV-1 TAT protein.

It is found in the cytoplasm. The protein localises to the nucleus. It carries out the reaction Cleavage of peptide bonds with very broad specificity.. Component of the 20S core proteasome complex involved in the proteolytic degradation of most intracellular proteins. This complex plays numerous essential roles within the cell by associating with different regulatory particles. Associated with two 19S regulatory particles, forms the 26S proteasome and thus participates in the ATP-dependent degradation of ubiquitinated proteins. The 26S proteasome plays a key role in the maintenance of protein homeostasis by removing misfolded or damaged proteins that could impair cellular functions, and by removing proteins whose functions are no longer required. Associated with the PA200 or PA28, the 20S proteasome mediates ubiquitin-independent protein degradation. This type of proteolysis is required in several pathways including spermatogenesis (20S-PA200 complex) or generation of a subset of MHC class I-presented antigenic peptides (20S-PA28 complex). Within the 20S core complex, PSMB5 displays a chymotrypsin-like activity. This chain is Proteasome subunit beta type-5, found in Homo sapiens (Human).